We begin with the raw amino-acid sequence, 102 residues long: Small ribosomal subunit protein uS10 (102 aa).

Belongs to the universal ribosomal protein uS10 family. In terms of assembly, part of the 30S ribosomal subunit.

Involved in the binding of tRNA to the ribosomes. In Geotalea daltonii (strain DSM 22248 / JCM 15807 / FRC-32) (Geobacter daltonii), this protein is Small ribosomal subunit protein uS10.